The sequence spans 470 residues: Cell division protein FtsA (470 aa).

The tract at residues 416-470 (NKKDTHENEVESTDEEIYQSEDNHQEHKQNHEHVQDKDKDKEESKFKKLMKSLFE) is disordered. The span at 425–434 (VESTDEEIYQ) shows a compositional bias: acidic residues. Residues 436-461 (EDNHQEHKQNHEHVQDKDKDKEESKF) show a composition bias toward basic and acidic residues.

Belongs to the FtsA/MreB family. Self-interacts. Interacts with FtsZ.

It localises to the cell membrane. Functionally, cell division protein that is involved in the assembly of the Z ring. May serve as a membrane anchor for the Z ring. The sequence is that of Cell division protein FtsA from Staphylococcus aureus (strain MSSA476).